The sequence spans 227 residues: UPF0173 metal-dependent hydrolase Bsph_4138 (227 aa).

Belongs to the UPF0173 family.

The chain is UPF0173 metal-dependent hydrolase Bsph_4138 from Lysinibacillus sphaericus (strain C3-41).